The sequence spans 200 residues: Holliday junction branch migration complex subunit RuvA (200 aa).

Positions Met1–Ser64 are domain I. Residues Ser65–Thr143 are domain II. Positions Pro144–Glu154 are flexible linker. The interval Glu154 to Arg200 is domain III.

The protein belongs to the RuvA family. Homotetramer. Forms an RuvA(8)-RuvB(12)-Holliday junction (HJ) complex. HJ DNA is sandwiched between 2 RuvA tetramers; dsDNA enters through RuvA and exits via RuvB. An RuvB hexamer assembles on each DNA strand where it exits the tetramer. Each RuvB hexamer is contacted by two RuvA subunits (via domain III) on 2 adjacent RuvB subunits; this complex drives branch migration. In the full resolvosome a probable DNA-RuvA(4)-RuvB(12)-RuvC(2) complex forms which resolves the HJ.

It is found in the cytoplasm. Its function is as follows. The RuvA-RuvB-RuvC complex processes Holliday junction (HJ) DNA during genetic recombination and DNA repair, while the RuvA-RuvB complex plays an important role in the rescue of blocked DNA replication forks via replication fork reversal (RFR). RuvA specifically binds to HJ cruciform DNA, conferring on it an open structure. The RuvB hexamer acts as an ATP-dependent pump, pulling dsDNA into and through the RuvAB complex. HJ branch migration allows RuvC to scan DNA until it finds its consensus sequence, where it cleaves and resolves the cruciform DNA. In Chlorobium luteolum (strain DSM 273 / BCRC 81028 / 2530) (Pelodictyon luteolum), this protein is Holliday junction branch migration complex subunit RuvA.